We begin with the raw amino-acid sequence, 473 residues long: ATP synthase subunit beta (473 aa).

An ATP-binding site is contributed by 158–165; it reads GGAGVGKT.

It belongs to the ATPase alpha/beta chains family. As to quaternary structure, F-type ATPases have 2 components, CF(1) - the catalytic core - and CF(0) - the membrane proton channel. CF(1) has five subunits: alpha(3), beta(3), gamma(1), delta(1), epsilon(1). CF(0) has three main subunits: a(1), b(2) and c(9-12). The alpha and beta chains form an alternating ring which encloses part of the gamma chain. CF(1) is attached to CF(0) by a central stalk formed by the gamma and epsilon chains, while a peripheral stalk is formed by the delta and b chains.

It is found in the cell membrane. It catalyses the reaction ATP + H2O + 4 H(+)(in) = ADP + phosphate + 5 H(+)(out). Its function is as follows. Produces ATP from ADP in the presence of a proton gradient across the membrane. The catalytic sites are hosted primarily by the beta subunits. The polypeptide is ATP synthase subunit beta (Bacillus velezensis (strain DSM 23117 / BGSC 10A6 / LMG 26770 / FZB42) (Bacillus amyloliquefaciens subsp. plantarum)).